The primary structure comprises 317 residues: MSNDRLLQNVVSILLMTGYNVSERCEIRPRSFDLMTSKGENLLVIKVVSQIDSVNEDIAWDLDKIARHLHAVPLIIGERARDVALERGAIYLRYGINAVSSATLYDYLAEGELPLVYASPGGLYVNIDAERLRTLREEQAMSLGDLAHALGVSRRTISKYEGGMGTTLEMAMRLEEFFNDDIVMPIDLLHYTPAEEEHVPASLASGHNPESDAQPKRPEDHLRSIGINVQELRRAPFHAFAMFENKTILTCYGSPQKTVQRAELVGNISQITGTHSLCVVSDYRKEKKIGKTLVIGEERLKNVEDGEDLLEMVTEEK.

The 58-residue stretch at L132 to L189 folds into the HTH cro/C1-type domain. The H-T-H motif DNA-binding region spans L143–G162. The disordered stretch occupies residues V199 to E219. A compositionally biased stretch (basic and acidic residues) spans P209 to E219.

This chain is Putative HTH-type transcriptional regulatory protein Mlab_0160, found in Methanocorpusculum labreanum (strain ATCC 43576 / DSM 4855 / Z).